We begin with the raw amino-acid sequence, 259 residues long: tRNA (guanine-N(7)-)-methyltransferase (259 aa).

Residues Gly80, 103–104 (EL), 136–137 (NS), and Leu156 contribute to the S-adenosyl-L-methionine site. Asp159 is a catalytic residue. 234–236 (TEE) is a binding site for S-adenosyl-L-methionine.

This sequence belongs to the class I-like SAM-binding methyltransferase superfamily. TrmB family.

The protein resides in the nucleus. It carries out the reaction guanosine(46) in tRNA + S-adenosyl-L-methionine = N(7)-methylguanosine(46) in tRNA + S-adenosyl-L-homocysteine. The protein operates within tRNA modification; N(7)-methylguanine-tRNA biosynthesis. Functionally, catalyzes the formation of N(7)-methylguanine at position 46 (m7G46) in tRNA. In Oryza sativa subsp. indica (Rice), this protein is tRNA (guanine-N(7)-)-methyltransferase.